Reading from the N-terminus, the 321-residue chain is Glucokinase (321 aa).

8 to 13 lines the ATP pocket; it reads GDVGGT.

It belongs to the bacterial glucokinase family.

Its subcellular location is the cytoplasm. It catalyses the reaction D-glucose + ATP = D-glucose 6-phosphate + ADP + H(+). The sequence is that of Glucokinase from Escherichia fergusonii (strain ATCC 35469 / DSM 13698 / CCUG 18766 / IAM 14443 / JCM 21226 / LMG 7866 / NBRC 102419 / NCTC 12128 / CDC 0568-73).